Consider the following 437-residue polypeptide: Replication factor C large subunit (437 aa).

48 to 55 provides a ligand contact to ATP; it reads GPPGVGKT. Residues 410 to 437 are disordered; sequence TQASKPTSEEKAEKSKKYYPKRSSSRKT. A compositionally biased stretch (basic and acidic residues) spans 416-425; sequence TSEEKAEKSK. Over residues 426 to 437 the composition is skewed to basic residues; it reads KYYPKRSSSRKT.

Belongs to the activator 1 small subunits family. RfcL subfamily. Heteromultimer composed of small subunits (RfcS) and large subunits (RfcL).

Its function is as follows. Part of the RFC clamp loader complex which loads the PCNA sliding clamp onto DNA. The protein is Replication factor C large subunit of Sulfolobus acidocaldarius (strain ATCC 33909 / DSM 639 / JCM 8929 / NBRC 15157 / NCIMB 11770).